The chain runs to 262 residues: MTLSIPPSIQCQTEAACRLITRVTGDTLRAIHLYGSAVAGGLKPNSDIDLLVTICQPLTEAQRATLMQELLALSSPPGASAEKRALEVTVVLYSQLVPWCFPPSREMQFGEWLREDICQGIYEPAQQDWDMVLLITQILETSIPLKGERAERLFTPAPAAQLLKALRYPLDLWQSTADVQGDEYHIVLTLARIWYTLSTGRFTSKDAAADWLLPQLPEDYAATLRAAQREYLGLEQQDWHILLPAVVRFVDFAKAHIPTQFT.

The tract at residues 1–157 (MTLSIPPSIQ…ERAERLFTPA (157 aa)) is adenylyltransferase domain. ATP-binding residues include serine 36, serine 46, and aspartate 47. Residues aspartate 47, aspartate 49, and glutamate 87 each coordinate Mg(2+). Glutamate 87 acts as the Proton acceptor in catalysis. Aspartate 130 contributes to the ATP binding site. Residues 158 to 262 (PAAQLLKALR…AKAHIPTQFT (105 aa)) are helical domain. Streptomycin-binding positions include 173-178 (WQSTAD) and histidine 185. ATP is bound by residues lysine 205 and tyrosine 231.

Monomer.

The enzyme catalyses streptomycin + ATP = 3''-O-adenylylstreptomycin + diphosphate. It carries out the reaction spectinomycin + ATP = 9-O-adenylylspectinomycin + diphosphate. Mediates bacterial resistance to the antibiotics streptomycin and spectinomycin, does not confer resistance to kanamycin. Binds ATP first, then antibiotic. In Salmonella typhimurium (strain LT2 / SGSC1412 / ATCC 700720), this protein is Aminoglycoside (3'') (9) adenylyltransferase (aadA).